A 516-amino-acid chain; its full sequence is Leucine-rich repeat transmembrane neuronal protein 2 (516 aa).

An N-terminal signal peptide occupies residues 1–33 (MGLHFKWPLGAPMLAAIYAMSMVLKMLPALGMA). An LRRNT domain is found at 34–61 (CPPKCRCEKLLFYCDSQGFHSVPNATDK). The Extracellular portion of the chain corresponds to 34 to 422 (CPPKCRCEKL…EPDNAIFTQR (389 aa)). Residue Asn57 is glycosylated (N-linked (GlcNAc...) asparagine). 10 LRR repeats span residues 63 to 83 (SLGL…QFAS), 86 to 107 (QLTW…AFQG), 110 to 131 (KLKE…TFTQ), 134 to 155 (NLQN…LFYG), 158 to 179 (KLQT…LFWD), 182 to 203 (SLEF…GFAG), 206 to 227 (KLRE…HFLR), 230 to 251 (SLHT…MEWT), 254 to 275 (TLEK…VFET), and 278 to 299 (NLKI…ILNS). The N-linked (GlcNAc...) asparagine glycan is linked to Asn126. An N-linked (GlcNAc...) asparagine glycan is attached at Asn243. The region spanning 311–362 (NLWECSARICALASWLGSFQGRWEHSILCHSPDHTQGEDILDAVHGFQLCWN) is the LRRCT domain. N-linked (GlcNAc...) asparagine glycosylation occurs at Asn362. A helical membrane pass occupies residues 423 to 443 (VITGTMALLFSFFFIIFIVFI). Residues 444 to 516 (SRKCCPPTLR…QQLPYKECEV (73 aa)) lie on the Cytoplasmic side of the membrane. Residues 513 to 516 (ECEV) carry the Involved in DLG4-binding motif.

The protein belongs to the LRRTM family. As to quaternary structure, interacts with DLG4. Interacts with neurexin NRXN1; interaction is mediated by heparan sulfate glycan modification on neurexin. Expressed in neuronal tissues.

The protein resides in the cell membrane. The protein localises to the postsynaptic cell membrane. Involved in the development and maintenance of excitatory synapses in the vertebrate nervous system. Regulates surface expression of AMPA receptors and instructs the development of functional glutamate release sites. Acts as a ligand for the presynaptic receptors NRXN1-A and NRXN1-B. The protein is Leucine-rich repeat transmembrane neuronal protein 2 (LRRTM2) of Homo sapiens (Human).